We begin with the raw amino-acid sequence, 254 residues long: MRESMRIELELQTDNFTVIPYNHQYYLASAIYNKIHSANPAYAKRLHNYQKFKFFTFSLLQIRKRVIRKEGIETIDGKAYLYISSPNNEFIENFVAGLLEDGKLRVGNVEFFVRKAKILPIPKKFNILKTISPIYLKTMIETEDGLKTYDLLPNNSKFYENLKNNLKKKYEAFYNEKCDMNFEFEVLKFRPKRMRIKNDIYCRCSEMVFKVWGDYDLIKFGYECGFGEKNSMGFGMVVNVEDKNQKNKKLKTKI.

Tyr32 serves as the catalytic Proton acceptor. His47 serves as the catalytic Proton donor.

This sequence belongs to the CRISPR-associated protein Cas6/Cse3/CasE family.

In terms of biological role, CRISPR (clustered regularly interspaced short palindromic repeat) is an adaptive immune system that provides protection against mobile genetic elements (viruses, transposable elements and conjugative plasmids). CRISPR clusters contain sequences complementary to antecedent mobile elements and target invading nucleic acids. CRISPR clusters are transcribed and processed into CRISPR RNA (crRNA). This protein processes pre-crRNA into individual crRNA units. The polypeptide is CRISPR-associated endoribonuclease Cas6 1 (cas6a) (Methanocaldococcus jannaschii (strain ATCC 43067 / DSM 2661 / JAL-1 / JCM 10045 / NBRC 100440) (Methanococcus jannaschii)).